A 756-amino-acid chain; its full sequence is MHLKIVLAFLALSLITIFALAYVLLTSPGGSSQPPHCPSVSHRAQPWPHPGQSQLFADLSREELTAVMRFLTQRLGPGLVDAAQAQPSDNCIFSVELQLPPKAAALAHLDRGSPPPAREALAIVLFGGQPQPNVSELVVGPLPHPSYMRDVTVERHGGPLPYHRRPVLRAEFTQMWRHLKEVELPKAPIFLSSTFNYNGSTLAAVHATPRGLRSGDRATWMALYHNISGVGLFLHPVGLELLLDHRALDPAHWTVQQVFYLGHYYADLGQLEREFKSGRLEVVRVPLPPPNGASSLRSRNSPGPLPPLQFSPQGSQYSVQGNLVVSSLWSFTFGHGVFSGLRIFDVRFQGERIAYEVSVQECVSIYGADSPKTMLTRYLDSSFGLGRNSRGLVRGVDCPYQATMVDIHILVGKGAVQLLPGAVCVFEEAQGLPLRRHHNYLQNHFYGGLASSALVVRSVSSVGNYDYIWDFVLYPNGALEGRVHATGYINTAFLKGGEEGLLFGNRVGERVLGTVHTHAFHFKLDLDVAGLKNWVVAEDVVFKPVAAPWNPEHWLQRPQLTRQVLGKEDLTAFSLGSPLPRYLYLASNQTNAWGHQRGYRIQIHSPLGIHIPLESDMERALSWGRYQLVVTQRKEEESQSSSIYHQNDIWTPTVTFADFINNETLLGEDLVAWVTASFLHIPHAEDIPNTVTLGNRVGFLLRPYNFFDEDPSIFSPGSVYFEKGQDAGLCSINPVACLPDLAACVPDLPPFSYHGF.

The Cytoplasmic segment spans residues 1 to 4 (MHLK). Residues 5-25 (IVLAFLALSLITIFALAYVLL) traverse the membrane as a helical segment. Over 26 to 756 (TSPGGSSQPP…DLPPFSYHGF (731 aa)) the chain is Extracellular. N-linked (GlcNAc...) asparagine glycans are attached at residues N133, N198, and N226. Catalysis depends on D380, which acts as the Proton acceptor. C398 and C424 form a disulfide bridge. Y465 functions as the Schiff-base intermediate with substrate; via topaquinone in the catalytic mechanism. 2',4',5'-topaquinone is present on Y465. The Cu(2+) site is built by H516 and H518. Residues D525, L526, D527, E568, E637, F659, and N661 each coordinate Ca(2+). N662 carries N-linked (GlcNAc...) asparagine glycosylation. Positions 663, 669, and 670 each coordinate Ca(2+). Position 680 (H680) interacts with Cu(2+). C730 and C737 are joined by a disulfide.

It belongs to the copper/topaquinone oxidase family. In terms of assembly, homodimer; disulfide-linked. Probably forms heterodimers with AOC3. Requires Cu(2+) as cofactor. Ca(2+) is required as a cofactor. L-topaquinone serves as cofactor. In terms of processing, topaquinone (TPQ) is generated by copper-dependent autoxidation of a specific tyrosyl residue. As to expression, expressed in many tissues including adipocytes with higher expression in retina where it is active. Not expressed in testis. In terms of tissue distribution, not expressed in thymus.

It localises to the cell membrane. Its subcellular location is the cytoplasm. The enzyme catalyses 2-phenylethylamine + O2 + H2O = 2-phenylacetaldehyde + H2O2 + NH4(+). The catalysed reaction is tryptamine + O2 + H2O = indole-3-acetaldehyde + H2O2 + NH4(+). It catalyses the reaction tyramine + O2 + H2O = (4-hydroxyphenyl)acetaldehyde + H2O2 + NH4(+). Functionally, catalyzes the oxidative deamination of primary amines to the corresponding aldehydes with the concomitant production of hydrogen peroxide and ammonia. Has a preference for 2-phenylethylamine, tryptamine and tyramine. Could also act on methylamine and benzylamine but much less efficiently. The chain is Amine oxidase [copper-containing] 2 from Homo sapiens (Human).